The chain runs to 137 residues: Nucleoside diphosphate kinase (137 aa).

The ATP site is built by K9, F57, R85, T91, R102, and N112. H115 acts as the Pros-phosphohistidine intermediate in catalysis.

The protein belongs to the NDK family. As to quaternary structure, homotetramer. Mg(2+) is required as a cofactor.

The protein resides in the cytoplasm. It carries out the reaction a 2'-deoxyribonucleoside 5'-diphosphate + ATP = a 2'-deoxyribonucleoside 5'-triphosphate + ADP. It catalyses the reaction a ribonucleoside 5'-diphosphate + ATP = a ribonucleoside 5'-triphosphate + ADP. Functionally, major role in the synthesis of nucleoside triphosphates other than ATP. The ATP gamma phosphate is transferred to the NDP beta phosphate via a ping-pong mechanism, using a phosphorylated active-site intermediate. This chain is Nucleoside diphosphate kinase, found in Thermus thermophilus (strain ATCC 27634 / DSM 579 / HB8).